A 310-amino-acid chain; its full sequence is Putative integrase/recombinase y4rE (310 aa).

The Core-binding (CB) domain maps to R6–A83. Positions P104–E301 constitute a Tyr recombinase domain. Active-site residues include R148, K173, H245, R248, and H279. Y288 acts as the O-(3'-phospho-DNA)-tyrosine intermediate in catalysis.

The protein belongs to the 'phage' integrase family.

This chain is Putative integrase/recombinase y4rE, found in Sinorhizobium fredii (strain NBRC 101917 / NGR234).